The chain runs to 435 residues: MSEFRQATDAFASNPVESKQEIRNYTMNFGPQHPAAHGVLRLILEMDGETVVRADPHIGLLHRGTEKLAESKPFNQSVPYMDRLDYVSMMCNEHAYVRAIESLMGIQAPERAQYIRTMFDEITRIKNHLMWVGSNALDLGAMAVMLYAFREREELMDVYEAVSGARMHAAYYRPGGVYRDLPDRMPQYKESRWHKGGALKKRNAGREGTMLDFLEEFTNTFPARVDEYETLLTDNRIWKQRTVDVGIISPDLARAWGMTGPMLRGSGIEWDLRKKQPYAKYDAVDFDIPVGTNGDCYDRYLVRVAEMRESNRIIKQCVKWLKANPGPVMVTNFKVAPPSREGMKDDMEALIHHFKLFSEGYCVPAGETYSAVEAPKGEFGCYLMSDGANKPFRVHLRAPGFAHLSSMDAVVRGYLLADVVAMIGTYDLVFGEVDR.

The protein belongs to the complex I 49 kDa subunit family. As to quaternary structure, NDH-1 is composed of 14 different subunits. Subunits NuoB, C, D, E, F, and G constitute the peripheral sector of the complex.

It localises to the cell inner membrane. It catalyses the reaction a quinone + NADH + 5 H(+)(in) = a quinol + NAD(+) + 4 H(+)(out). In terms of biological role, NDH-1 shuttles electrons from NADH, via FMN and iron-sulfur (Fe-S) centers, to quinones in the respiratory chain. The immediate electron acceptor for the enzyme in this species is believed to be ubiquinone. Couples the redox reaction to proton translocation (for every two electrons transferred, four hydrogen ions are translocated across the cytoplasmic membrane), and thus conserves the redox energy in a proton gradient. This chain is NADH-quinone oxidoreductase subunit D, found in Xanthomonas axonopodis pv. citri (strain 306).